The primary structure comprises 427 residues: Septin-8-B (427 aa).

Residues 39–305 enclose the Septin-type G domain; that stretch reads QGFCFNILCV…ELYRRCKLEE (267 aa). The segment at 49–56 is G1 motif; it reads GETGIGKS. Residues 49–56, glycine 104, 185–193, glycine 239, and arginine 254 each bind GTP; these read GETGIGKS and KADTISKSE. The interval 101 to 104 is G3 motif; the sequence is DTVG. The tract at residues 184 to 187 is G4 motif; sequence AKAD. A coiled-coil region spans residues 320–407; that stretch reads LQETYEAKRK…RRKVAMETLQ (88 aa). Over residues 406-418 the composition is skewed to polar residues; that stretch reads LQSQSFQATSQQP. Residues 406-427 are disordered; the sequence is LQSQSFQATSQQPLKKDKDRKN.

Belongs to the TRAFAC class TrmE-Era-EngA-EngB-Septin-like GTPase superfamily. Septin GTPase family.

The polypeptide is Septin-8-B (sept8-b) (Xenopus laevis (African clawed frog)).